We begin with the raw amino-acid sequence, 372 residues long: Glutamate 5-kinase (372 aa).

Residue Lys14 coordinates ATP. Ser54, Asp141, and Asn153 together coordinate substrate. 173–174 (TD) contacts ATP. Residues 280-358 (RGTLVLDDGA…DAIESLLGYS (79 aa)) form the PUA domain.

Belongs to the glutamate 5-kinase family.

It is found in the cytoplasm. The enzyme catalyses L-glutamate + ATP = L-glutamyl 5-phosphate + ADP. It functions in the pathway amino-acid biosynthesis; L-proline biosynthesis; L-glutamate 5-semialdehyde from L-glutamate: step 1/2. In terms of biological role, catalyzes the transfer of a phosphate group to glutamate to form L-glutamate 5-phosphate. In Pseudomonas entomophila (strain L48), this protein is Glutamate 5-kinase.